A 1362-amino-acid polypeptide reads, in one-letter code: MGGKNKKNRHGSSTAVQGATAAANRPRAAAEPRPGGEDAAKKQTPRNSNVAPGSKESNKQGPKTYSFASSSDSGVSVNHDKSVLKVVIEAKLEKRIISLINEHKKLNSNKGTVSGRLTSKKLQDLYMALQKLSFKAEHIEEAMTNTVLYGGDLHAALDWLCLNLPDDALPEGFSQQFVEEEQRARAKFQAPPQRPSAANESATEKGEEGASLKGNPELTMKEWILRYAEQGSDDDDDDDDVKEEEKETTLEKFDPNERYLELTAKLLDARAQATATKQDKDKQGQKEAQERIRGYQQEMKSLEDHPLFNPAVKIPEVKSESKQPKPALPPSEDEPLNFNLFEKKENAPEEKAKKKPPLDIRNFDYTSRSWTGKSPKQFLIDWCRKHYSKSPNPSFEKVPVGKYWKSRVKIIKSHDDVMCVCPTIVTEDSMQAQHLAATLALYELTKGQSVHQLLPPTYRNVWLEWSDAEKQVQEQNKTESNKPRDQFITKLLNKLKVQQNQLKSCSQTQMMEDPEDSWENLACDEEQHETCPSPLLPDDLEPIRNIFRKSRDSMKYKRLLNDREQLPVFARGNFILETLKRHRVIVVAGETGSGKSTQVPQFLLEDLLFNGGSPGKCNIVCTQPRRISAMSLATRVCEELGCDSGPGGKNSLCGYQIRMESRTGEATRLLYCTTGILLRKLQEDSMLKNISHIIVDEVHERTVQSDFLLIILREILHKRSDLHLVLMSATVDCEKFSSYFTHCPIIRISGRTFPVEVFHLEDVVEATGFVLEQDSEYCQKFLEDEEEITLSVTGKGGSSKKYQEFIPAQSGTGLDLGARYQRYSSQTRHAVLYMNPNKINLDLILELLVFLDISPEYRNVEGAVLIFLPGLADIQQLYDILSSDKRFHDRRRYKLIALHSILSSQDQAEAFILPPAGTRKIVLATNIAETGITIPDVVFVIDAGRTKENRYHESSQMSSLVETFISKASALQRQGRAGRVRNGYCFRLYTRERFESFMEYSVPEILRVPLEELCLHIMKCDLGSPEDFLSKALDPPQLQVISNAMSLLRKIGACELSQPKLTPLGQHLAALPVNVKIGKMLIFGAIFGCLDAVATLAATMTEKSPFVTPIGEKDRADLAKSSMAVANSDHVTIFRAYLGWKAIRPEGYAAEMSYCRKNFLNRKALLTIEDVKQELIRLVRAAGFECPRSVEANGLSSAMKALSAEETSLLKAILTAGLYDNVGKILFTKSVDITEKLACIVETAQGKAQVHPSSVNRDLQIYGWLLYQEKVKYSKVFLRETTLISPFPVLLFGGDIAVQHRERLLTVDDWIHFQAPVKIAVIFKELRILIESVLKQKLENPKMSLKDDMILNIIKELIKTER.

A compositionally biased stretch (basic residues) spans 1 to 10 (MGGKNKKNRH). The tract at residues 1-76 (MGGKNKKNRH…FASSSDSGVS (76 aa)) is disordered. A compositionally biased stretch (low complexity) spans 18–27 (GATAAANRPR). The span at 28–41 (AAAEPRPGGEDAAK) shows a compositional bias: basic and acidic residues. A compositionally biased stretch (low complexity) spans 66–76 (SFASSSDSGVS). Positions 89 to 109 (EAKLEKRIISLINEHKKLNSN) form a coiled coil. 2 disordered regions span residues 182–215 (QRAR…LKGN) and 229–257 (EQGS…DPNE). A compositionally biased stretch (acidic residues) spans 231–242 (GSDDDDDDDDVK). Basic and acidic residues predominate over residues 243-257 (EEEKETTLEKFDPNE). A coiled-coil region spans residues 285-305 (QKEAQERIRGYQQEMKSLEDH). Residues 317-336 (VKSESKQPKPALPPSEDEPL) are disordered. Residues 576-749 (LETLKRHRVI…FTHCPIIRIS (174 aa)) enclose the Helicase ATP-binding domain. 589–596 (GETGSGKS) is an ATP binding site. The DEAH box signature appears at 696-699 (DEVH). The Helicase C-terminal domain maps to 852 to 1021 (DISPEYRNVE…ELCLHIMKCD (170 aa)).

It belongs to the DEAD box helicase family. DEAH subfamily. In terms of assembly, part of the 43S pre-initiation complex (PIC).

It is found in the cytoplasm. It carries out the reaction ATP + H2O = ADP + phosphate + H(+). Its function is as follows. ATP-binding RNA helicase involved in translation initiation. Part of the 43S pre-initiation complex that is required for efficient initiation on mRNAs of higher eukaryotes with structured 5'-UTRs by promoting efficient NTPase-dependent 48S complex formation. Specifically binds to the 40S ribosome near the mRNA entrance. Does not possess a processive helicase activity. The protein is ATP-dependent RNA helicase dhx29 of Xenopus laevis (African clawed frog).